The following is an 83-amino-acid chain: Exodeoxyribonuclease 7 small subunit (83 aa).

The protein belongs to the XseB family. As to quaternary structure, heterooligomer composed of large and small subunits.

Its subcellular location is the cytoplasm. It carries out the reaction Exonucleolytic cleavage in either 5'- to 3'- or 3'- to 5'-direction to yield nucleoside 5'-phosphates.. Its function is as follows. Bidirectionally degrades single-stranded DNA into large acid-insoluble oligonucleotides, which are then degraded further into small acid-soluble oligonucleotides. The polypeptide is Exodeoxyribonuclease 7 small subunit (Rhizobium meliloti (strain 1021) (Ensifer meliloti)).